Consider the following 351-residue polypeptide: Methylthioribose-1-phosphate isomerase (351 aa).

Substrate is bound by residues 51-53 (RGA), Arg-94, and Gln-199. Asp-240 serves as the catalytic Proton donor. A substrate-binding site is contributed by 250–251 (NK).

Belongs to the EIF-2B alpha/beta/delta subunits family. MtnA subfamily. As to quaternary structure, homodimer.

It catalyses the reaction 5-(methylsulfanyl)-alpha-D-ribose 1-phosphate = 5-(methylsulfanyl)-D-ribulose 1-phosphate. It functions in the pathway amino-acid biosynthesis; L-methionine biosynthesis via salvage pathway; L-methionine from S-methyl-5-thio-alpha-D-ribose 1-phosphate: step 1/6. Functionally, catalyzes the interconversion of methylthioribose-1-phosphate (MTR-1-P) into methylthioribulose-1-phosphate (MTRu-1-P). The protein is Methylthioribose-1-phosphate isomerase of Bacillus cereus (strain ZK / E33L).